Here is a 566-residue protein sequence, read N- to C-terminus: Arginine--tRNA ligase (566 aa).

The 'HIGH' region signature appears at 121 to 131 (ANPNGPFHIGH).

The protein belongs to the class-I aminoacyl-tRNA synthetase family.

It localises to the cytoplasm. It carries out the reaction tRNA(Arg) + L-arginine + ATP = L-arginyl-tRNA(Arg) + AMP + diphosphate. The chain is Arginine--tRNA ligase from Methanococcus maripaludis (strain C6 / ATCC BAA-1332).